A 98-amino-acid chain; its full sequence is NADH-ubiquinone oxidoreductase chain 4L (98 aa).

A run of 3 helical transmembrane segments spans residues 2-22 (PSIF…TLVF), 29-49 (SLLC…LIIL), and 61-81 (ILLL…LVMV).

The protein belongs to the complex I subunit 4L family. As to quaternary structure, core subunit of respiratory chain NADH dehydrogenase (Complex I) which is composed of 45 different subunits.

The protein localises to the mitochondrion inner membrane. It carries out the reaction a ubiquinone + NADH + 5 H(+)(in) = a ubiquinol + NAD(+) + 4 H(+)(out). Functionally, core subunit of the mitochondrial membrane respiratory chain NADH dehydrogenase (Complex I) which catalyzes electron transfer from NADH through the respiratory chain, using ubiquinone as an electron acceptor. Part of the enzyme membrane arm which is embedded in the lipid bilayer and involved in proton translocation. The sequence is that of NADH-ubiquinone oxidoreductase chain 4L (MT-ND4L) from Propithecus tattersalli (Golden-crowned Sifaka).